We begin with the raw amino-acid sequence, 943 residues long: MTQDYKATLHLPATEFPMRGDLPKREPAMLERWEREGFYAQLRANAAGRPLFVLHDGPPYANGQIHLGHAVNKILKDIIVKSKYLAGFDAPYIPGWDCHGLPIEIAIEKKYGKVGVKLDAAEFRQKCREYATEQIDLQRRDFKRLGVIGDWDNPYKTLDFRFEANEIRALAKVVDNGHLTRGVKPVHWCFDCGSALAEAEIEYADKVSPTVDIAYPARDPAAVAAAFGASLPAGVGVAVPIWTTTPWTLPASLAVSLGAELDYVLVEGPADRGQPRWLVIAEALAAKALARYGVGEVVVHGHAKGAALEHMLLNHPFYAEREIPLLLGDHVSAEDGTGAVHTAPGHGQEDYQVSKQYGLLERYGAAQINPVDGRGVYLPSTPPLRDTVLAGLHIWKANDVIIEALRETGVLLAASKMEHSYPHCWRHKTPIAFRATPQWFISMEQANLRADALKAIENVHWYPSWGQARIAGMVDGRPDWTISRQRTWGVPIALFVHRETGEPHPRSTELLRQVADRVEQGGVDVWYTLDASELLSSEAADYEKITDILDVWFDSGVTHEAVLPDRGLPKPADLYLEGSDQHRGWFQSSLLSGVAMDKAAPYKQCLTHGFTVDEHGRKMSKSLGNGIEPQDIMKTLGADILRLWIASADYSNEMSLSQEILKRNADAYRRLRNTARFLLGNLHGFDPLQHLVALDEMVLLDRWIVHRAHELQEKIVAAYARYDFAEIVQALLNFCSVDLGSLYLDVTKDRLYTMAEDARGRRSAQSAMYHVAEAFVRWIAPVLSFTAEELWGYLPGKHVDNVLFATWYDGLAPLPADAALSGADFDKLLVLREQVAKVLEPMRANGAIGAALEAEITVAADAQTAARWQPLAEELRFLFISGDVTVTAASTDDIFVSAQPTTKAKCVRCWHHQASVGSDPRHPELCSRCVSNIEGPGERRRWF.

Positions 59-69 (PYANGQIHLGH) match the 'HIGH' region motif. Glu577 contributes to the L-isoleucyl-5'-AMP binding site. A 'KMSKS' region motif is present at residues 618–622 (KMSKS). Residue Lys621 participates in ATP binding. Cys906, Cys909, Cys926, and Cys929 together coordinate Zn(2+).

This sequence belongs to the class-I aminoacyl-tRNA synthetase family. IleS type 1 subfamily. In terms of assembly, monomer. Zn(2+) serves as cofactor.

The protein resides in the cytoplasm. The enzyme catalyses tRNA(Ile) + L-isoleucine + ATP = L-isoleucyl-tRNA(Ile) + AMP + diphosphate. Its function is as follows. Catalyzes the attachment of isoleucine to tRNA(Ile). As IleRS can inadvertently accommodate and process structurally similar amino acids such as valine, to avoid such errors it has two additional distinct tRNA(Ile)-dependent editing activities. One activity is designated as 'pretransfer' editing and involves the hydrolysis of activated Val-AMP. The other activity is designated 'posttransfer' editing and involves deacylation of mischarged Val-tRNA(Ile). This chain is Isoleucine--tRNA ligase, found in Xanthomonas axonopodis pv. citri (strain 306).